Reading from the N-terminus, the 841-residue chain is Protein NLP6 (841 aa).

The RWP-RK domain maps to 539–624 (EAKTVKKSER…IDSVQGADGS (86 aa)). The disordered stretch occupies residues 649–682 (NCPPTSTSPLSNLQDVKIENRDAEDSAGSSTSRA). Residues 651–662 (PPTSTSPLSNLQ) are compositionally biased toward polar residues. A PB1 domain is found at 741–823 (LVSIKATYRE…NTLRLSVHDV (83 aa)).

It localises to the nucleus. In terms of biological role, probable transcription factor. The chain is Protein NLP6 (NLP6) from Arabidopsis thaliana (Mouse-ear cress).